We begin with the raw amino-acid sequence, 355 residues long: 3-isopropylmalate dehydrogenase (355 aa).

Residue 77–90 (GAKWDNLPREKRPE) participates in NAD(+) binding. Positions 97, 107, 135, and 220 each coordinate substrate. Residues Asp-220, Asp-244, and Asp-248 each coordinate Mg(2+). 277 to 289 (GSAPDIAGQGIAN) lines the NAD(+) pocket.

This sequence belongs to the isocitrate and isopropylmalate dehydrogenases family. LeuB type 1 subfamily. In terms of assembly, homodimer. Requires Mg(2+) as cofactor. Mn(2+) is required as a cofactor.

The protein resides in the cytoplasm. The enzyme catalyses (2R,3S)-3-isopropylmalate + NAD(+) = 4-methyl-2-oxopentanoate + CO2 + NADH. Its pathway is amino-acid biosynthesis; L-leucine biosynthesis; L-leucine from 3-methyl-2-oxobutanoate: step 3/4. Functionally, catalyzes the oxidation of 3-carboxy-2-hydroxy-4-methylpentanoate (3-isopropylmalate) to 3-carboxy-4-methyl-2-oxopentanoate. The product decarboxylates to 4-methyl-2 oxopentanoate. The polypeptide is 3-isopropylmalate dehydrogenase (Sulfurimonas denitrificans (strain ATCC 33889 / DSM 1251) (Thiomicrospira denitrificans (strain ATCC 33889 / DSM 1251))).